A 452-amino-acid chain; its full sequence is Phosphoglucosamine mutase (452 aa).

Catalysis depends on Ser-103, which acts as the Phosphoserine intermediate. Ser-103, Asp-243, Asp-245, and Asp-247 together coordinate Mg(2+). At Ser-103 the chain carries Phosphoserine.

The protein belongs to the phosphohexose mutase family. Requires Mg(2+) as cofactor. In terms of processing, activated by phosphorylation.

It carries out the reaction alpha-D-glucosamine 1-phosphate = D-glucosamine 6-phosphate. Its function is as follows. Catalyzes the conversion of glucosamine-6-phosphate to glucosamine-1-phosphate. In Lactobacillus acidophilus (strain ATCC 700396 / NCK56 / N2 / NCFM), this protein is Phosphoglucosamine mutase.